The sequence spans 120 residues: Large ribosomal subunit protein bL19 (120 aa).

This sequence belongs to the bacterial ribosomal protein bL19 family.

Functionally, this protein is located at the 30S-50S ribosomal subunit interface and may play a role in the structure and function of the aminoacyl-tRNA binding site. This is Large ribosomal subunit protein bL19 (rplS) from Nostoc sp. (strain PCC 7120 / SAG 25.82 / UTEX 2576).